The sequence spans 86 residues: Small ribosomal subunit protein uS17 (86 aa).

It belongs to the universal ribosomal protein uS17 family. In terms of assembly, part of the 30S ribosomal subunit.

One of the primary rRNA binding proteins, it binds specifically to the 5'-end of 16S ribosomal RNA. This is Small ribosomal subunit protein uS17 from Caldicellulosiruptor bescii (strain ATCC BAA-1888 / DSM 6725 / KCTC 15123 / Z-1320) (Anaerocellum thermophilum).